The chain runs to 258 residues: MLTAEKLCVERQGHRILSDVSVEISPGQVVAVLGANGAGKSTLLQCLSGDVSEAKQHVFLNGKNLDSYTSQALAMARAVMPQSVQMDFAFLVSELVEMGLWQIPRQSDKQQRVDEALALFGIETLKQRDYQTLSGGEQQRVQLARVVAQLLTPIAQADAPRYLLLDECTANLDFAHQHQVFEVVKKLANTYQMGVVVVLHDMNLAAQYADHLVLLKQGKVLDQGSVESMLIPSKIEELYDFPVQVLPHPKGWPMIVPA.

The 241-residue stretch at 2–242 folds into the ABC transporter domain; the sequence is LTAEKLCVER…SKIEELYDFP (241 aa). Position 34-41 (34-41) interacts with ATP; the sequence is GANGAGKS.

Belongs to the ABC transporter superfamily. Heme (hemin) importer (TC 3.A.1.14.5) family. The complex is composed of two ATP-binding proteins (HmuV), two transmembrane proteins (HmuU) and a solute-binding protein (HmuT).

It is found in the cell inner membrane. Functionally, part of the ABC transporter complex HmuTUV involved in hemin import. Responsible for energy coupling to the transport system. This is Hemin import ATP-binding protein HmuV from Hydrogenovibrio crunogenus (strain DSM 25203 / XCL-2) (Thiomicrospira crunogena).